The chain runs to 384 residues: MLTCIARSKRAGDESSGQPDDPDSKNAKSLTSQLKDMALKASGAYRHCTPCTAAQGQGQGQGPIKNNPSSSSVKSDFESDQRFKMLYGRSNSSITATAAVAATQQQQPRVWGKEMEARLKGISSGEATPKSASGRNRVDPIVFVEEKEPKEWVAQVEPGVLITFVSLPGGGNDLKRIRFSRDMFNKLQAQRWWADNYDKVMELYNVQKLSRQAFPLPTPPRSEDENAKVEYHPEDTPATPPLNKERLPRTIHRPPGLAAYSSSDSLDHNSMQSQQFYDSGLLNSTPKVSSISVAKTETSSIDASIRSSSSRDADRSEEMSVSNASDVDNEWVEQDEPGVYITIKVLPGGKRELRRVRFSRERFGEMHARLWWEENRARIHEQYL.

2 disordered regions span residues 1-35 (MLTC…SQLK) and 50-78 (PCTA…SDFE). A BRX 1 domain is found at 150–205 (KEWVAQVEPGVLITFVSLPGGGNDLKRIRFSRDMFNKLQAQRWWADNYDKVMELYN). Disordered regions lie at residues 214–270 (FPLP…DHNS) and 304–325 (SIRS…SNAS). Residues 221-235 (RSEDENAKVEYHPED) are compositionally biased toward basic and acidic residues. Polar residues predominate over residues 260–270 (YSSSDSLDHNS). Positions 309–318 (SSRDADRSEE) are enriched in basic and acidic residues. One can recognise a BRX 2 domain in the interval 329-384 (NEWVEQDEPGVYITIKVLPGGKRELRRVRFSRERFGEMHARLWWEENRARIHEQYL).

Belongs to the BRX family. Expressed in roots.

It is found in the nucleus. This is Protein Brevis radix-like 4 (BRXL4) from Arabidopsis thaliana (Mouse-ear cress).